A 210-amino-acid chain; its full sequence is N-(5'-phosphoribosyl)anthranilate isomerase (210 aa).

Belongs to the TrpF family.

It catalyses the reaction N-(5-phospho-beta-D-ribosyl)anthranilate = 1-(2-carboxyphenylamino)-1-deoxy-D-ribulose 5-phosphate. It participates in amino-acid biosynthesis; L-tryptophan biosynthesis; L-tryptophan from chorismate: step 3/5. The protein is N-(5'-phosphoribosyl)anthranilate isomerase of Magnetococcus marinus (strain ATCC BAA-1437 / JCM 17883 / MC-1).